Here is a 136-residue protein sequence, read N- to C-terminus: Small ribosomal subunit protein uS9 (136 aa).

It belongs to the universal ribosomal protein uS9 family.

The polypeptide is Small ribosomal subunit protein uS9 (Borrelia duttonii (strain Ly)).